The chain runs to 127 residues: Modulator protein MzrA (127 aa).

The Cytoplasmic segment spans residues 1 to 10; sequence MLKPRITARQ. A helical membrane pass occupies residues 11–31; it reads LIWISAFLLMLTILMMTWSTL. The Periplasmic portion of the chain corresponds to 32–127; it reads RQQESTLAIR…RLRESSHRFG (96 aa).

It belongs to the MzrA family. Interacts with EnvZ.

Its subcellular location is the cell inner membrane. Functionally, modulates the activity of the EnvZ/OmpR two-component regulatory system, probably by directly modulating EnvZ enzymatic activity and increasing stability of phosphorylated OmpR. The chain is Modulator protein MzrA from Salmonella agona (strain SL483).